We begin with the raw amino-acid sequence, 95 residues long: ESAT-6-like protein EsxC (95 aa).

This sequence belongs to the WXG100 family. ESAT-6 subfamily.

It is found in the secreted. The sequence is that of ESAT-6-like protein EsxC from Mycobacterium tuberculosis (strain CDC 1551 / Oshkosh).